The sequence spans 469 residues: MDESVDRVLAGKYPAKAHAKRVAARIRELGYGESGVIYLEGQKTQMIEDNDGSMPFRQRRNFFYLSGCPLPDSYLTYNIEEDHLTLFIPPIDEDSVIWSGLPLSPDEALEMYDVDAVLLTTDVNTSLAHFCSVKKGKKVFAIADQVSPHITFLPFQETDFDVLKRAAEESRVVKDTYEIALLRRANEISTKAHVAVIKAARSAANERELEAIFIATCMSYGCREQSYHPIFASGTNAATLHYQNNNEDLVDKTTGEKRLNMLVDAGGEYRTYCADITRVVPLSGKFSAESRQIYDIVLDMQMTSLAMIRAGVMWEDVHSNSHRVAIRGLLKLGILRGTEEELFDKGISVAFFPHGVGHYLGMDTHDTGGNPNYKDENPKFKYLRLRGTLACGAVVTVEPGIYFCRFIIDPYLASPELGKYIDTNVLERYWNVGGVRIEDNVVVTQNGHDNLTAAPKIPEEIEKLVAAAQ.

D264, D275, E398, and E438 together coordinate Mn(2+).

Belongs to the peptidase M24B family. The cofactor is Mn(2+).

The enzyme catalyses Release of any N-terminal amino acid, including proline, that is linked to proline, even from a dipeptide or tripeptide.. Catalyzes the removal of a penultimate prolyl residue from the N-termini of peptides. The sequence is that of Probable Xaa-Pro aminopeptidase PEPP (PEPP) from Ajellomyces capsulatus (strain G186AR / H82 / ATCC MYA-2454 / RMSCC 2432) (Darling's disease fungus).